The primary structure comprises 116 residues: Peptidyl-tRNA hydrolase (116 aa).

This sequence belongs to the PTH2 family.

The protein localises to the cytoplasm. The catalysed reaction is an N-acyl-L-alpha-aminoacyl-tRNA + H2O = an N-acyl-L-amino acid + a tRNA + H(+). Its function is as follows. The natural substrate for this enzyme may be peptidyl-tRNAs which drop off the ribosome during protein synthesis. The sequence is that of Peptidyl-tRNA hydrolase (pth) from Methanococcus maripaludis (strain DSM 14266 / JCM 13030 / NBRC 101832 / S2 / LL).